The chain runs to 220 residues: Deoxyribose-phosphate aldolase (220 aa).

The active-site Proton donor/acceptor is the aspartate 89. Lysine 151 acts as the Schiff-base intermediate with acetaldehyde in catalysis. The Proton donor/acceptor role is filled by lysine 180.

The protein belongs to the DeoC/FbaB aldolase family. DeoC type 1 subfamily.

It localises to the cytoplasm. It catalyses the reaction 2-deoxy-D-ribose 5-phosphate = D-glyceraldehyde 3-phosphate + acetaldehyde. It functions in the pathway carbohydrate degradation; 2-deoxy-D-ribose 1-phosphate degradation; D-glyceraldehyde 3-phosphate and acetaldehyde from 2-deoxy-alpha-D-ribose 1-phosphate: step 2/2. In terms of biological role, catalyzes a reversible aldol reaction between acetaldehyde and D-glyceraldehyde 3-phosphate to generate 2-deoxy-D-ribose 5-phosphate. This Streptococcus mutans serotype c (strain ATCC 700610 / UA159) protein is Deoxyribose-phosphate aldolase.